Here is a 156-residue protein sequence, read N- to C-terminus: ATP synthase subunit b (156 aa).

A helical transmembrane segment spans residues 7-26; that stretch reads FIGQMVAFAIFIYLTYRYVW.

The protein belongs to the ATPase B chain family. F-type ATPases have 2 components, F(1) - the catalytic core - and F(0) - the membrane proton channel. F(1) has five subunits: alpha(3), beta(3), gamma(1), delta(1), epsilon(1). F(0) has three main subunits: a(1), b(2) and c(10-14). The alpha and beta chains form an alternating ring which encloses part of the gamma chain. F(1) is attached to F(0) by a central stalk formed by the gamma and epsilon chains, while a peripheral stalk is formed by the delta and b chains.

The protein localises to the cell inner membrane. Its function is as follows. F(1)F(0) ATP synthase produces ATP from ADP in the presence of a proton or sodium gradient. F-type ATPases consist of two structural domains, F(1) containing the extramembraneous catalytic core and F(0) containing the membrane proton channel, linked together by a central stalk and a peripheral stalk. During catalysis, ATP synthesis in the catalytic domain of F(1) is coupled via a rotary mechanism of the central stalk subunits to proton translocation. In terms of biological role, component of the F(0) channel, it forms part of the peripheral stalk, linking F(1) to F(0). This is ATP synthase subunit b from Cellvibrio japonicus (strain Ueda107) (Pseudomonas fluorescens subsp. cellulosa).